A 459-amino-acid polypeptide reads, in one-letter code: uncharacterized protein (459 aa).

Residues 13-145 form the B12-binding domain; that stretch reads TESAIKRVVG…DALSKGRELK (133 aa). The Radical SAM core domain maps to 188–402; that stretch reads ADGVPFGVVM…MNWRKYTTID (215 aa). [4Fe-4S] cluster-binding residues include C202, C206, and C209.

The protein belongs to the methyltransferase superfamily. [4Fe-4S] cluster is required as a cofactor.

This is an uncharacterized protein from Pyrococcus horikoshii (strain ATCC 700860 / DSM 12428 / JCM 9974 / NBRC 100139 / OT-3).